A 153-amino-acid chain; its full sequence is Arginine repressor (153 aa).

The protein belongs to the ArgR family.

It localises to the cytoplasm. The protein operates within amino-acid biosynthesis; L-arginine biosynthesis [regulation]. Functionally, regulates arginine biosynthesis genes. This chain is Arginine repressor, found in Acetivibrio thermocellus (strain ATCC 27405 / DSM 1237 / JCM 9322 / NBRC 103400 / NCIMB 10682 / NRRL B-4536 / VPI 7372) (Clostridium thermocellum).